Consider the following 179-residue polypeptide: Large ribosomal subunit protein uL5 (179 aa).

It belongs to the universal ribosomal protein uL5 family. As to quaternary structure, part of the 50S ribosomal subunit; part of the 5S rRNA/L5/L18/L25 subcomplex. Contacts the 5S rRNA and the P site tRNA. Forms a bridge to the 30S subunit in the 70S ribosome.

Functionally, this is one of the proteins that bind and probably mediate the attachment of the 5S RNA into the large ribosomal subunit, where it forms part of the central protuberance. In the 70S ribosome it contacts protein S13 of the 30S subunit (bridge B1b), connecting the 2 subunits; this bridge is implicated in subunit movement. Contacts the P site tRNA; the 5S rRNA and some of its associated proteins might help stabilize positioning of ribosome-bound tRNAs. The sequence is that of Large ribosomal subunit protein uL5 from Pelobacter propionicus (strain DSM 2379 / NBRC 103807 / OttBd1).